Consider the following 1723-residue polypeptide: Homeobox protein 5 (1723 aa).

Positions Gln-36–Gln-50 are enriched in low complexity. Disordered stretches follow at residues Gln-36–Thr-425, Ser-440–Gln-522, Glu-543–Thr-756, Gly-878–Leu-978, Ile-1080–Asn-1214, Val-1226–Gln-1264, Ile-1345–Ser-1399, Gln-1456–Thr-1498, and His-1513–Lys-1547. Positions Asp-51 to Tyr-72 are enriched in polar residues. Composition is skewed to low complexity over residues Asn-73 to Ser-107 and Asn-114 to Asn-212. Composition is skewed to polar residues over residues Ser-223–Pro-237 and Gly-244–Asp-257. Composition is skewed to low complexity over residues Asn-258 to Ser-284 and Asn-291 to Asn-350. The stretch at Tyr-300–Gln-351 forms a coiled coil. Residues Gln-351–Met-369 are compositionally biased toward polar residues. Composition is skewed to low complexity over residues Gln-371–Ser-421 and Ser-440–Ser-465. Polar residues predominate over residues Met-483 to Asn-510. Low complexity-rich tracts occupy residues Leu-511–Gln-522, Asn-544–Asn-571, and Asn-581–Asn-593. Positions His-632–Met-655 are enriched in polar residues. Gly residues predominate over residues Leu-660 to Phe-669. A compositionally biased stretch (polar residues) spans Ile-673–Gln-685. Composition is skewed to low complexity over residues Ser-686–Met-699, Ser-710–Leu-727, and Ser-734–Thr-745. Positions Pro-746–Leu-755 are enriched in pro residues. Residues Asn-882–Thr-928 are compositionally biased toward low complexity. Positions Ser-929–Phe-945 are enriched in polar residues. Composition is skewed to low complexity over residues Gln-946–Ser-977 and Asn-1082–Ser-1146. Polar residues-rich tracts occupy residues Pro-1147–Gly-1159 and Asp-1176–Gln-1187. The stretch at Gln-1193 to Leu-1270 forms a coiled coil. Over residues Gln-1194–Asn-1214 the composition is skewed to low complexity. Over residues Val-1226–Glu-1242 the composition is skewed to polar residues. Low complexity-rich tracts occupy residues Gln-1243–Gln-1264, Asn-1347–Pro-1384, Gln-1456–Pro-1480, Ser-1487–Thr-1498, and Ser-1518–Pro-1528. The stretch at Val-1431 to Thr-1464 forms a coiled coil. Over residues His-1529 to Ser-1543 the composition is skewed to polar residues. The segment at residues Ser-1543–Pro-1607 is a DNA-binding region (homeobox). The 36-residue stretch at Phe-1553–Thr-1588 folds into the EF-hand domain. Disordered regions lie at residues Asn-1598–Ser-1625 and Leu-1661–Glu-1723. Over residues Thr-1612–Ser-1625 the composition is skewed to low complexity. Positions Leu-1632 to Asn-1702 form a coiled coil. The span at Ser-1665–Met-1675 shows a compositional bias: polar residues. Low complexity predominate over residues Asn-1676 to Glu-1723.

Its subcellular location is the nucleus. Putative transcription factor. This Dictyostelium discoideum (Social amoeba) protein is Homeobox protein 5 (hbx5-1).